A 445-amino-acid polypeptide reads, in one-letter code: Phosphoglucosamine mutase (445 aa).

Ser-102 serves as the catalytic Phosphoserine intermediate. Residues Ser-102, Asp-241, Asp-243, and Asp-245 each coordinate Mg(2+). Ser-102 is modified (phosphoserine).

This sequence belongs to the phosphohexose mutase family. Mg(2+) is required as a cofactor. Post-translationally, activated by phosphorylation.

It catalyses the reaction alpha-D-glucosamine 1-phosphate = D-glucosamine 6-phosphate. Its function is as follows. Catalyzes the conversion of glucosamine-6-phosphate to glucosamine-1-phosphate. The protein is Phosphoglucosamine mutase of Shewanella pealeana (strain ATCC 700345 / ANG-SQ1).